Here is a 79-residue protein sequence, read N- to C-terminus: Small ribosomal subunit protein bS18 (79 aa).

The protein belongs to the bacterial ribosomal protein bS18 family. Part of the 30S ribosomal subunit. Forms a tight heterodimer with protein bS6.

In terms of biological role, binds as a heterodimer with protein bS6 to the central domain of the 16S rRNA, where it helps stabilize the platform of the 30S subunit. This chain is Small ribosomal subunit protein bS18, found in Onion yellows phytoplasma (strain OY-M).